Here is a 223-residue protein sequence, read N- to C-terminus: Cytidylate kinase (223 aa).

13–21 is an ATP binding site; sequence GPSASGKGT.

The protein belongs to the cytidylate kinase family. Type 1 subfamily.

It is found in the cytoplasm. It carries out the reaction CMP + ATP = CDP + ADP. The catalysed reaction is dCMP + ATP = dCDP + ADP. This Nitrosomonas europaea (strain ATCC 19718 / CIP 103999 / KCTC 2705 / NBRC 14298) protein is Cytidylate kinase.